A 282-amino-acid chain; its full sequence is Methyltransferase tpcH (282 aa).

This sequence belongs to the class I-like SAM-binding methyltransferase superfamily. As to expression, specifically expressed in conidia.

It functions in the pathway secondary metabolite biosynthesis. Its function is as follows. Methyltransferase; part of the gene cluster that mediates the biosynthesis of trypacidin, a mycotoxin with antiprotozoal activity and that plays a role in the infection process. The pathway begins with the synthesis of atrochrysone thioester by the polyketide synthase (PKS) tpcC. The atrochrysone carboxyl ACP thioesterase tpcB then breaks the thioester bond and releases the atrochrysone carboxylic acid from tpcC. The decarboxylase tpcK converts atrochrysone carboxylic acid to atrochrysone which is further reduced into emodin anthrone. The next step is performed by the emodin anthrone oxygenase tpcL that catalyzes the oxidation of emodinanthrone to emodin. Emodin O-methyltransferase encoded by tpcA catalyzes methylation of the 8-hydroxy group of emodin to form questin. Ring cleavage of questin by questin oxidase tpcI leads to desmethylsulochrin via several intermediates including questin epoxide. Another methylation step catalyzed by tpcM leads to the formation of sulochrin which is further converted to monomethylsulfochrin by tpcH. Finally, the tpcJ catalyzes the conversion of monomethylsulfochrin to trypacidin. Trypacidin is toxic for human pulmonary and bronchial epithelial cells by initiating the intracellular formation of nitric oxide (NO) and hydrogen peroxide (H(2)O(2)), thus triggering host necrotic cell death. The trypacidin pathway is also able to produce endocrocin via a distinct route from the endocrocin Enc pathway. The polypeptide is Methyltransferase tpcH (Aspergillus fumigatus (strain ATCC MYA-4609 / CBS 101355 / FGSC A1100 / Af293) (Neosartorya fumigata)).